The following is an 803-amino-acid chain: Leucine--tRNA ligase (803 aa).

Positions Pro40–His51 match the 'HIGH' region motif. A 'KMSKS' region motif is present at residues Lys575–Ser579. Lys578 contacts ATP.

It belongs to the class-I aminoacyl-tRNA synthetase family.

The protein localises to the cytoplasm. It carries out the reaction tRNA(Leu) + L-leucine + ATP = L-leucyl-tRNA(Leu) + AMP + diphosphate. This Listeria monocytogenes serotype 4a (strain HCC23) protein is Leucine--tRNA ligase.